The primary structure comprises 341 residues: MTTMDHRFPSRIFVNERTSITREQLNSLLETYNVFYENQKNLHILYGQTEDGQLIVEGMLDIFWGVKRPIQLKIQDEKQISSFDLLKSPETFSSKGRMTRWGEFDDLYRISEMDKTQALAPEARHTPEDYLSCYSVLKQCADEEPESPLLYRTVSEAALVRKRMRAPEMYRKDRMGTLAKHRASINGHVYDHETSIFTPTFGSETKVRANSIMKTEEVIKQLLQKFKIENSPRDFALYIIFGTGEKRKLKKTDVPLLQRLIQGPSKSNARIFLMDKDAEEISSDVAPYINFHFSFLKSILQRLDEEEKMEIERIMAKFNTERAFILKCLQSKRAAKTETTV.

The residue at position 155 (Ser-155) is a Phosphoserine. Positions 190–278 (YDHETSIFTP…ARIFLMDKDA (89 aa)) constitute a Ras-associating domain. Residues 285–332 (VAPYINFHFSFLKSILQRLDEEEKMEIERIMAKFNTERAFILKCLQSK) form the SARAH domain.

In terms of assembly, interacts with MOAP1. Interaction with activated KRAS is still a matter of debate.

In terms of biological role, involved in the induction of apoptosis. May act as a Ras effector protein. May suppress the serum-induced basal levels of NF-kappa-B. The sequence is that of Ras association domain-containing protein 6 (Rassf6) from Rattus norvegicus (Rat).